Here is a 176-residue protein sequence, read N- to C-terminus: 2-C-methyl-D-erythritol 2,4-cyclodiphosphate synthase (176 aa).

A divalent metal cation-binding residues include aspartate 23, histidine 25, and histidine 60. 23–25 contacts 4-CDP-2-C-methyl-D-erythritol 2-phosphate; sequence DSH. 149 to 152 is a 4-CDP-2-C-methyl-D-erythritol 2-phosphate binding site; that stretch reads TSGE.

This sequence belongs to the IspF family. As to quaternary structure, homotrimer. Requires a divalent metal cation as cofactor.

The catalysed reaction is 4-CDP-2-C-methyl-D-erythritol 2-phosphate = 2-C-methyl-D-erythritol 2,4-cyclic diphosphate + CMP. The protein operates within isoprenoid biosynthesis; isopentenyl diphosphate biosynthesis via DXP pathway; isopentenyl diphosphate from 1-deoxy-D-xylulose 5-phosphate: step 4/6. Functionally, involved in the biosynthesis of isopentenyl diphosphate (IPP) and dimethylallyl diphosphate (DMAPP), two major building blocks of isoprenoid compounds. Catalyzes the conversion of 4-diphosphocytidyl-2-C-methyl-D-erythritol 2-phosphate (CDP-ME2P) to 2-C-methyl-D-erythritol 2,4-cyclodiphosphate (ME-CPP) with a corresponding release of cytidine 5-monophosphate (CMP). The sequence is that of 2-C-methyl-D-erythritol 2,4-cyclodiphosphate synthase from Chlamydia felis (strain Fe/C-56) (Chlamydophila felis).